Reading from the N-terminus, the 608-residue chain is ATP-citrate synthase beta chain protein 2 (608 aa).

ATP-binding positions include 214–234 and 265–291; these read ILRFNNIPQIKMMVVLGELGG and FKSEVQFGHAGAKSGGEMESAQAKNQA. Position 231 (E231) interacts with Mg(2+). Catalysis depends on H273, which acts as the Tele-phosphohistidine intermediate. 292–302 is a CoA binding site; sequence LIDAGAIVPTS.

It belongs to the succinate/malate CoA ligase alpha subunit family. In terms of assembly, heterooctamer of 4 alpha and 4 beta chains. In terms of tissue distribution, expressed in trichomes, epidermal leaf cells, anther tapetal cells, stigma and in young vascular bundles of expanding leaves, cotyledons, roots, pedicel of flowers and siliques.

The protein resides in the cytoplasm. It localises to the cytosol. The catalysed reaction is oxaloacetate + acetyl-CoA + ADP + phosphate = citrate + ATP + CoA. Its function is as follows. ATP citrate-lyase is the primary enzyme responsible for the synthesis of cytosolic acetyl-CoA, used for the elongation of fatty acids and biosynthesis of isoprenoids, flavonoids and malonated derivatives. May supply substrate to the cytosolic acetyl-CoA carboxylase, which generates the malonyl-CoA used for the synthesis of a multitude of compounds, including very long chain fatty acids and flavonoids. Required for normal growth and development and elongation of C18 fatty acids to C20 to C24 fatty acids in seeds. n contrast to all known animal ACL enzymes having a homomeric structure, plant ACLs are composed of alpha and beta chains. This is ATP-citrate synthase beta chain protein 2 from Arabidopsis thaliana (Mouse-ear cress).